A 341-amino-acid chain; its full sequence is Alanine racemase (341 aa).

K33 (proton acceptor; specific for D-alanine) is an active-site residue. At K33 the chain carries N6-(pyridoxal phosphate)lysine. R126 contributes to the substrate binding site. Y236 functions as the Proton acceptor; specific for L-alanine in the catalytic mechanism. M284 lines the substrate pocket.

It belongs to the alanine racemase family. It depends on pyridoxal 5'-phosphate as a cofactor.

The enzyme catalyses L-alanine = D-alanine. It functions in the pathway amino-acid biosynthesis; D-alanine biosynthesis; D-alanine from L-alanine: step 1/1. Functionally, catalyzes the interconversion of L-alanine and D-alanine. This Aquifex pyrophilus protein is Alanine racemase (alr).